The sequence spans 480 residues: ATP synthase subunit beta, chloroplastic (480 aa).

Residue 161–168 (GGAGVGKT) participates in ATP binding.

This sequence belongs to the ATPase alpha/beta chains family. F-type ATPases have 2 components, CF(1) - the catalytic core - and CF(0) - the membrane proton channel. CF(1) has five subunits: alpha(3), beta(3), gamma(1), delta(1), epsilon(1). CF(0) has four main subunits: a(1), b(1), b'(1) and c(9-12).

Its subcellular location is the plastid. The protein resides in the chloroplast thylakoid membrane. The catalysed reaction is ATP + H2O + 4 H(+)(in) = ADP + phosphate + 5 H(+)(out). Functionally, produces ATP from ADP in the presence of a proton gradient across the membrane. The catalytic sites are hosted primarily by the beta subunits. This is ATP synthase subunit beta, chloroplastic from Euglena gracilis.